The sequence spans 93 residues: YcgL domain-containing protein PSHAb0508 (93 aa).

One can recognise a YcgL domain in the interval 1-85 (MLTAVYKSKK…PQENLLSQLR (85 aa)).

This Pseudoalteromonas translucida (strain TAC 125) protein is YcgL domain-containing protein PSHAb0508.